Reading from the N-terminus, the 92-residue chain is Small ribosomal subunit protein uS19 (92 aa).

It belongs to the universal ribosomal protein uS19 family.

Functionally, protein S19 forms a complex with S13 that binds strongly to the 16S ribosomal RNA. The protein is Small ribosomal subunit protein uS19 of Macrococcus caseolyticus (strain JCSC5402) (Macrococcoides caseolyticum).